A 524-amino-acid chain; its full sequence is Excitatory amino acid transporter 3 (524 aa).

Over 1–18 (MGKPARKGCDSKRFLKNN) the chain is Cytoplasmic. The helical transmembrane segment at 19 to 38 (WLLLSTVVAVVLGIVIGVLV) threads the bilayer. At 39–61 (REYSNLSTLDKFYFAFPGEILMR) the chain is on the extracellular side. An N-linked (GlcNAc...) asparagine glycan is attached at Asn-43. A helical membrane pass occupies residues 62–82 (MLKLVILPLIVSSMITGVAAL). Topologically, residues 83–93 (DSNVSGKIGLR) are cytoplasmic. A helical transmembrane segment spans residues 94–114 (AVLYYFCTTIIAVILGIVLVV). 3 residues coordinate Na(+): Tyr-98, Thr-101, and Thr-102. Over 115–205 (SIKPGVTQKV…RTKEYRVVGL (91 aa)) the chain is Extracellular. Asn-178 and Asn-195 each carry an N-linked (GlcNAc...) asparagine glycan. The helical transmembrane segment at 206 to 229 (YSDGINVLGLIVFCLVFGLVIGKM) threads the bilayer. Topologically, residues 230 to 238 (GEKGQILVD) are cytoplasmic. The chain crosses the membrane as a helical span at residues 239–266 (FFNALSDATMKIVQIIMCYMPLGILFLI). Residues 267 to 286 (AGKIIEVEDWEIFRKLGLYM) lie on the Extracellular side of the membrane. Residues 287-308 (VTVLSGLAIHSIVILPLIYFIV) traverse the membrane as a helical segment. Residues 309-313 (VRKNP) lie on the Cytoplasmic side of the membrane. Residues 314 to 344 (FRFAMGMTQALLTALMISSSSATLPVTFRCA) constitute an intramembrane region (discontinuously helical). Positions 331 and 333 each coordinate L-aspartate. Residues 345 to 353 (EEKNRVDKR) are Cytoplasmic-facing. A helical transmembrane segment spans residues 354 to 380 (ITRFVLPVGATINMDGTALYEAVAAVF). 4 residues coordinate Na(+): Gly-362, Thr-364, Asn-366, and Asp-368. Thr-370 contacts L-aspartate. Residues 381 to 393 (IAQLNDMDLSIGQ) are Extracellular-facing. Positions 394-427 (IITISVTATAASIGAAGVPQAGLVTMVIVLSAVG) form an intramembrane region, discontinuously helical. Residues Ser-405, Ile-406, and Ala-408 each coordinate Na(+). Val-411 provides a ligand contact to L-aspartate. At 428–440 (LPAEDVTLIIAVD) the chain is on the extracellular side. The helical transmembrane segment at 441–462 (WLLDRFRTVVNVLGDAFGTGIV) threads the bilayer. The L-aspartate site is built by Arg-447, Thr-448, and Asn-451. Residues Asn-451 and Asp-455 each coordinate Na(+). Over 463–524 (EKLSKKELEQ…TISFTQTSQF (62 aa)) the chain is Cytoplasmic. Phosphoserine occurs at positions 517 and 522.

The protein belongs to the dicarboxylate/amino acid:cation symporter (DAACS) (TC 2.A.23) family. SLC1A1 subfamily. Homotrimer. Interacts with ARL6IP5. Interacts with RTN2 (via N-terminus); the interaction promotes cell surface expression of SLC1A1. Interacts with SORCS2; this interaction is important for normal expression at the cell membrane. As to expression, brain, but also small intestine, kidney, liver and heart.

The protein resides in the cell membrane. The protein localises to the apical cell membrane. Its subcellular location is the synapse. It is found in the synaptosome. It localises to the early endosome membrane. The protein resides in the late endosome membrane. The protein localises to the recycling endosome membrane. The catalysed reaction is K(+)(in) + L-glutamate(out) + 3 Na(+)(out) + H(+)(out) = K(+)(out) + L-glutamate(in) + 3 Na(+)(in) + H(+)(in). The enzyme catalyses K(+)(in) + L-aspartate(out) + 3 Na(+)(out) + H(+)(out) = K(+)(out) + L-aspartate(in) + 3 Na(+)(in) + H(+)(in). It catalyses the reaction D-aspartate(out) + K(+)(in) + 3 Na(+)(out) + H(+)(out) = D-aspartate(in) + K(+)(out) + 3 Na(+)(in) + H(+)(in). It carries out the reaction K(+)(in) + L-cysteine(out) + 3 Na(+)(out) + H(+)(out) = K(+)(out) + L-cysteine(in) + 3 Na(+)(in) + H(+)(in). Its function is as follows. Sodium-dependent, high-affinity amino acid transporter that mediates the uptake of L-glutamate and also L-aspartate and D-aspartate. Can also transport L-cysteine. Functions as a symporter that transports one amino acid molecule together with two or three Na(+) ions and one proton, in parallel with the counter-transport of one K(+) ion. Mediates Cl(-) flux that is not coupled to amino acid transport; this avoids the accumulation of negative charges due to aspartate and Na(+) symport. Plays an important role in L-glutamate and L-aspartate reabsorption in renal tubuli. Plays a redundant role in the rapid removal of released glutamate from the synaptic cleft, which is essential for terminating the postsynaptic action of glutamate. Contributes to glutathione biosynthesis and protection against oxidative stress via its role in L-glutamate and L-cysteine transport. Negatively regulated by ARL6IP5. The sequence is that of Excitatory amino acid transporter 3 (SLC1A1) from Oryctolagus cuniculus (Rabbit).